A 746-amino-acid chain; its full sequence is Exostosin-1 (746 aa).

The Cytoplasmic segment spans residues 1–5 (MQAKK). Residues 6 to 26 (RYFILLSAGSCLALLFYFGGV) form a helical; Signal-anchor for type II membrane protein membrane-spanning segment. Residues 27–746 (QFRASRSHSR…RKKYRDIERL (720 aa)) are Lumenal-facing. N-linked (GlcNAc...) asparagine glycosylation is present at Asn-89. 2 cysteine pairs are disulfide-bonded: Cys-98/Cys-103 and Cys-109/Cys-152. 2 residues coordinate a protein: Leu-166 and Tyr-203. The UDP site is built by Lys-267, Lys-269, Tyr-271, and Arg-280. Cysteines 298 and 312 form a disulfide. His-300 provides a ligand contact to a protein. 2 residues coordinate UDP: Tyr-319 and Tyr-324. An N-linked (GlcNAc...) asparagine glycan is attached at Asn-330. 2 disulfide bridges follow: Cys-334–Cys-355 and Cys-652–Cys-704. Positions 346 and 349 each coordinate UDP.

The protein belongs to the glycosyltransferase 47 family. Part of the heparan sulfate polymerase, a dimeric complex composed of EXT1 and EXT2. Could also form homooligomeric complexes. Interacts with NDST1. In terms of processing, N-glycosylated.

The protein resides in the golgi apparatus membrane. The protein localises to the golgi apparatus. It is found in the cis-Golgi network membrane. Its subcellular location is the endoplasmic reticulum membrane. It carries out the reaction 3-O-{alpha-D-GlcNAc-[(1-&gt;4)-beta-D-GlcA-(1-&gt;4)-alpha-D-GlcNAc](n)-(1-&gt;4)-beta-D-GlcA-(1-&gt;3)-beta-D-Gal-(1-&gt;3)-beta-D-Gal-(1-&gt;4)-beta-D-Xyl}-L-seryl-[protein] + UDP-alpha-D-glucuronate = 3-O-{[(1-&gt;4)-beta-D-GlcA-(1-&gt;4)-alpha-D-GlcNAc](n+1)-(1-&gt;4)-beta-D-GlcA-(1-&gt;3)-beta-D-Gal-(1-&gt;3)-beta-D-Gal-(1-&gt;4)-beta-D-Xyl}-L-seryl-[protein] + UDP + H(+). The protein operates within protein modification; protein glycosylation. Glycosyltransferase forming with EXT2 the heterodimeric heparan sulfate polymerase which catalyzes the elongation of the heparan sulfate glycan backbone. Glycan backbone extension consists in the alternating transfer of (1-&gt;4)-beta-D-GlcA and (1-&gt;4)-alpha-D-GlcNAc residues from their respective UDP-sugar donors. Both EXT1 and EXT2 are required for the full activity of the polymerase since EXT1 bears the N-acetylglucosaminyl-proteoglycan 4-beta-glucuronosyltransferase activity within the complex while EXT2 carries the glucuronosyl-N-acetylglucosaminyl-proteoglycan 4-alpha-N-acetylglucosaminyltransferase activity. Heparan sulfate proteoglycans are ubiquitous components of the extracellular matrix and play an important role in tissue homeostasis and signaling. The chain is Exostosin-1 from Cricetulus griseus (Chinese hamster).